Consider the following 166-residue polypeptide: MISDESDRFNPRDPKPADAGKPSKSAKRREARKLATQALYQWHMAKHSLNEVEAQFRVDNDFSDVDGAYFREILHGVPAKKVEIDEALKPCLDTPLEELDPVELSVLRLSAWEFMMRADVPYRVVINEGVELAKVFGATDGHKFVNGVLDKLAPRLREAEVRANKR.

The segment covering 1–18 (MISDESDRFNPRDPKPAD) has biased composition (basic and acidic residues). The interval 1-30 (MISDESDRFNPRDPKPADAGKPSKSAKRRE) is disordered.

Belongs to the NusB family.

Involved in transcription antitermination. Required for transcription of ribosomal RNA (rRNA) genes. Binds specifically to the boxA antiterminator sequence of the ribosomal RNA (rrn) operons. This is Transcription antitermination protein NusB from Pseudomonas entomophila (strain L48).